Reading from the N-terminus, the 163-residue chain is Retinoic acid receptor responder protein 2 (163 aa).

A signal peptide spans 1-20; that stretch reads MRRLLIPLALWLGAVGVGVA. Cystine bridges form between Cys-77–Cys-87, Cys-98–Cys-117, and Cys-101–Cys-135. The propeptide occupies 158–163; it reads KALPRS.

Secreted in an inactive precursor form, prochemerin, which is proteolytically processed by a variety of extracellular proteases to generate forms with differing levels of bioactivity. For example, the removal of six amino acids results in chemerin-157, which exhibits the highest activity, while removal of seven amino acids results in chemerin-156 which has slightly less activity. Some proteases are able to cleave at more than one site and chemerin forms may be sequentially processed by different enzymes to modulate activity levels. The coordinated expression and activity of chemerin-modifying enzymes is essential for regulating its bioactivation, inactivation and, consequently, biological function. Cathepsin G cleaves seven C-terminal amino acids from prochemerin (chemerin-156), elastase is able to cleave six (chemerin-157), eight (chemerin-155) or eleven (chemerin-152), plasmin cleaves five amino acids (chemerin-158), and tryptase cleaves five (chemerin-158) or eight (chemerin-155). Multiple cleavages might be required to fully activate chemerin, with an initial tryptase cleavage resulting in chemerin with low activity (chemerin-158), and a second cleavage by carboxypeptidase N or B producing highly active chemerin (chemerin-157).

It localises to the secreted. Functionally, adipocyte-secreted protein (adipokine) that regulates adipogenesis, metabolism and inflammation through activation of the chemokine-like receptor 1 (CMKLR1). Also acts as a ligand for CMKLR2. Can also bind to C-C chemokine receptor-like 2 (CCRL2), but with a lower affinity than it does to CMKLR1 or CMKLR2. Positively regulates adipocyte differentiation, modulates the expression of adipocyte genes involved in lipid and glucose metabolism and might play a role in angiogenesis, a process essential for the expansion of white adipose tissue. Also acts as a pro-inflammatory adipokine, causing an increase in secretion of pro-inflammatory and prodiabetic adipokines, which further impair adipose tissue metabolic function and have negative systemic effects including impaired insulin sensitivity, altered glucose and lipid metabolism, and a decrease in vascular function in other tissues. Can have both pro- and anti-inflammatory properties depending on the modality of enzymatic cleavage by different classes of proteases. Acts as a chemotactic factor for leukocyte populations expressing CMKLR1, particularly immature plasmacytoid dendritic cells, but also immature myeloid DCs, macrophages and natural killer cells. Exerts an anti-inflammatory role by preventing TNF/TNFA-induced VCAM1 expression and monocytes adhesion in vascular endothelial cells. The effect is mediated via inhibiting activation of NF-kappa-B and CRK/p38 through stimulation of AKT1/NOS3 signaling and nitric oxide production. Exhibits an antimicrobial function in the skin. In Pongo abelii (Sumatran orangutan), this protein is Retinoic acid receptor responder protein 2 (RARRES2).